The sequence spans 1020 residues: DNA-directed RNA polymerase 2, chloroplastic/mitochondrial (1020 aa).

Residues 314–336 (KKQKAEKDKQKEDGEHVTQEQEK) form a disordered region. Catalysis depends on residues Asp721, Lys796, and Asp953.

Belongs to the phage and mitochondrial RNA polymerase family. As to expression, the highest levels of expression are detected in the mature leaves. The level of expression is lowest in the cotyledons.

It localises to the plastid. Its subcellular location is the chloroplast. The protein resides in the mitochondrion. The catalysed reaction is RNA(n) + a ribonucleoside 5'-triphosphate = RNA(n+1) + diphosphate. In terms of biological role, DNA-dependent RNA polymerase catalyzes the transcription of DNA into RNA using the four ribonucleoside triphosphates as substrates. The chain is DNA-directed RNA polymerase 2, chloroplastic/mitochondrial (RPOT2) from Nicotiana sylvestris (Wood tobacco).